The primary structure comprises 471 residues: Trigger factor (471 aa).

The 96-residue stretch at 169 to 264 (GDVAVVDFKG…LKEIKEKELP (96 aa)) folds into the PPIase FKBP-type domain.

The protein belongs to the FKBP-type PPIase family. Tig subfamily.

It is found in the cytoplasm. The enzyme catalyses [protein]-peptidylproline (omega=180) = [protein]-peptidylproline (omega=0). In terms of biological role, involved in protein export. Acts as a chaperone by maintaining the newly synthesized protein in an open conformation. Functions as a peptidyl-prolyl cis-trans isomerase. The protein is Trigger factor of Nostoc sp. (strain PCC 7120 / SAG 25.82 / UTEX 2576).